Consider the following 604-residue polypeptide: Ribosome-inactivating protein PMRIPm (604 aa).

The signal sequence occupies residues 1–43 (MRVVAAILYINVVVALICGLGIQGGALDLQDYPSVSFQGDAMQ). Glu-211 is an active-site residue. 3 cysteine pairs are disulfide-bonded: Cys-301/Cys-332, Cys-348/Cys-367, and Cys-392/Cys-409. 2 Ricin B-type lectin domains span residues 335-463 (GEPT…WRVG) and 466-598 (VEPI…WLTV). The stretch at 345 to 387 (AGWCVDVKDGRDNDGNPIQVLSCGDGQERKQQWTFHRDGTIRS) is one 1-alpha repeat. The stretch at 389-429 (LGKCMTAYGFKHGEYVMIYDCDTAIAGANKWVVSIDGTITN) is one 1-beta repeat. The stretch at 432–465 (SGLVLTAPRGATGTTLLVEKNVHAARQCWRVGDD) is one 1-gamma repeat. A 2-alpha repeat occupies 477-521 (QEKCLEANYLENTNVSRYTKVFLDDCVLDRQQQRWALYSDGTIRA). A disulfide bridge links Cys-480 with Cys-502. The N-linked (GlcNAc...) asparagine glycan is linked to Asn-490. The 2-beta repeat unit spans residues 525-563 (RSLRVTADGHRSLDSIIILACKGWGNQRWVFNTDGTILN). The stretch at 566–599 (AKLVMDVKDSDVSLLQIILHQSTGKPNQKWLTVT) is one 2-gamma repeat.

Belongs to the ribosome-inactivating protein family. Type 2 RIP subfamily. Disulfide-linked dimer of A and B chains. Post-translationally, the precursor is processed in two chains, A and B, that are linked by a disulfide bond. Glycosylated. In terms of processing, the N-terminus is blocked. In terms of tissue distribution, expressed in rhizome and abundantly in leaves (at protein level).

The enzyme catalyses Endohydrolysis of the N-glycosidic bond at one specific adenosine on the 28S rRNA.. With respect to regulation, strongly inhibited by asialofetuin and asialomucin. Functionally, gal/GalNAc-specific agglutinin. Behaves as a type-2 ribosome-inactivating protein. Inhibits mammalian ribosomes. The A chain is responsible for inhibiting protein synthesis through the catalytic inactivation of 60S ribosomal subunits by removing adenine from position 4,324 of 28S rRNA. The B chain binds to cell receptors and probably facilitates the entry into the cell of the A chain; B chains are also responsible for cell agglutination (lectin activity). Involved in plant defense against insects. Has very low cytotoxic activity against the human tumor cell line Molt4, but higher against CEM. The chain is Ribosome-inactivating protein PMRIPm from Polygonatum multiflorum (Solomon's seal).